A 323-amino-acid chain; its full sequence is tRNA dimethylallyltransferase (323 aa).

Residue 18-25 (GPTASGKT) participates in ATP binding. 20-25 (TASGKT) lines the substrate pocket. The segment at 44–47 (DSAL) is interaction with substrate tRNA.

Belongs to the IPP transferase family. Monomer. The cofactor is Mg(2+).

The catalysed reaction is adenosine(37) in tRNA + dimethylallyl diphosphate = N(6)-dimethylallyladenosine(37) in tRNA + diphosphate. Functionally, catalyzes the transfer of a dimethylallyl group onto the adenine at position 37 in tRNAs that read codons beginning with uridine, leading to the formation of N6-(dimethylallyl)adenosine (i(6)A). This is tRNA dimethylallyltransferase from Blochmanniella floridana.